A 51-amino-acid polypeptide reads, in one-letter code: Insulin (51 aa).

3 disulfide bridges follow: cysteine 7-cysteine 37, cysteine 19-cysteine 50, and cysteine 36-cysteine 41.

This sequence belongs to the insulin family. Heterodimer of a B chain and an A chain linked by two disulfide bonds.

The protein localises to the secreted. Its function is as follows. Insulin decreases blood glucose concentration. It increases cell permeability to monosaccharides, amino acids and fatty acids. It accelerates glycolysis, the pentose phosphate cycle, and glycogen synthesis in liver. In Didelphis virginiana (North American opossum), this protein is Insulin (INS).